The chain runs to 129 residues: Phosphoribosyl-AMP cyclohydrolase (129 aa).

Asp-76 contacts Mg(2+). Cys-77 serves as a coordination point for Zn(2+). The Mg(2+) site is built by Asp-78 and Asp-80. Zn(2+)-binding residues include Cys-97 and Cys-104.

The protein belongs to the PRA-CH family. Homodimer. It depends on Mg(2+) as a cofactor. The cofactor is Zn(2+).

The protein localises to the cytoplasm. It carries out the reaction 1-(5-phospho-beta-D-ribosyl)-5'-AMP + H2O = 1-(5-phospho-beta-D-ribosyl)-5-[(5-phospho-beta-D-ribosylamino)methylideneamino]imidazole-4-carboxamide. It participates in amino-acid biosynthesis; L-histidine biosynthesis; L-histidine from 5-phospho-alpha-D-ribose 1-diphosphate: step 3/9. Its function is as follows. Catalyzes the hydrolysis of the adenine ring of phosphoribosyl-AMP. The polypeptide is Phosphoribosyl-AMP cyclohydrolase (Leptothrix cholodnii (strain ATCC 51168 / LMG 8142 / SP-6) (Leptothrix discophora (strain SP-6))).